The primary structure comprises 150 residues: MNESIDINQIFTLLPHRYPFILVDRVIDYKVMEYLIAIKNVTINENFFTGHFPGNPIMPGVLMLEALAQASGILANLSRQPKEGYEFLHYFAGIDNARFKQVVIPGDQLRLEVRLVGQKRDFWRMHGEAYIGDKLACSADLLSATKEIKK.

The active site involves His51.

Belongs to the thioester dehydratase family. FabZ subfamily.

The protein resides in the cytoplasm. It catalyses the reaction a (3R)-hydroxyacyl-[ACP] = a (2E)-enoyl-[ACP] + H2O. Involved in unsaturated fatty acids biosynthesis. Catalyzes the dehydration of short chain beta-hydroxyacyl-ACPs and long chain saturated and unsaturated beta-hydroxyacyl-ACPs. The polypeptide is 3-hydroxyacyl-[acyl-carrier-protein] dehydratase FabZ (Legionella pneumophila (strain Lens)).